A 422-amino-acid polypeptide reads, in one-letter code: MSLNLLVNQEELKRYLDEYGVWSKIFRALFVARNSKPLRSFCVHYAIKELKEKTYNLELYQSLFEEFQDCFENEQLDVEWVESVTFHRKQNLEQLRRELKAYKNNLIRESIRAAQLDLASFFADVGQFDSALRSYAKVREYCTNAGQIAHLSLELMRISIWIGNYSHVLAFGSRAKSTVSAAMELTSPIYAYCGLANFCLGDYEEALAHFLKVETDTSDGIITKTDISVYISLCALACWDHKRLIQELERNEEFNALSDLDPSLRRCLQAKCNRKYSLLLDTLQQNAQDYSLDMYLAPQLTNLFSLIRERSLLDYLIPYSALPFSKIAVDFHIDENFIEKNLLEIIEAKKLNGKVDSLQKRVYIEPSSEPENFEDIKNIAQTSLLYSKALYLQTLAAMNTENTDDEAPVIAQTNITAEDSQN.

The 168-residue stretch at 202–369 (DYEEALAHFL…KRVYIEPSSE (168 aa)) folds into the PCI domain.

The protein belongs to the CSN1 family. Component of the COP9 signalosome (CSN) complex composed of at least csn1, csn2, csn4 and csn5 subunits.

It is found in the cytoplasm. It localises to the nucleus. Functionally, component of the COP9 signalosome (CSN) complex that acts as an regulator of the ubiquitin (Ubl) conjugation pathway by mediating the deneddylation of the cullin subunit of SCF-type E3 ubiquitin-protein ligase complexes. Required, indirectly, for activation of ribonucleotide reductase through the degradation of the protein spd1, thereby supplying deoxyribonucleotides for DNA replication and repair. The chain is COP9 signalosome complex subunit 1 (csn1) from Schizosaccharomyces pombe (strain 972 / ATCC 24843) (Fission yeast).